We begin with the raw amino-acid sequence, 2565 residues long: Transformation/transcription domain-associated protein (2565 aa).

A phosphoserine mark is found at serine 328, serine 749, and serine 775. The interval 710-1087 is interaction with TP53; that stretch reads SEVVIKWELQ…SPMAANQTPT (378 aa). A Bipartite nuclear localization signal motif is present at residues 745 to 760; that stretch reads KRGLSVDSAQEVKRFR. Lysine 1242 is covalently cross-linked (Glycyl lysine isopeptide (Lys-Gly) (interchain with G-Cter in SUMO2)). Residues 1242–1253 are compositionally biased toward basic and acidic residues; that stretch reads KQEPRERENSES. The disordered stretch occupies residues 1242-1277; it reads KQEPRERENSESKEEDVEIDIELAPGDQTSTPKTKE. In terms of domain architecture, FAT spans 1391–1963; that stretch reads VLKYLGKTHN…YFPIRTLYLT (573 aa). Lysine 1766 carries the N6-acetyllysine modification. The interval 1973-1995 is disordered; sequence KSDSGQQQPSSAGNQSHSASDPG. Residues 1975–1991 are compositionally biased toward polar residues; that stretch reads DSGQQQPSSAGNQSHSA. The PI3K/PI4K catalytic domain maps to 2206–2529; it reads MPRVEIVQKH…AVTAIMTRLH (324 aa). The segment at 2212–2218 is G-loop; the sequence is VQKHNTA. The catalytic loop stretch occupies residues 2393–2401; that stretch reads HLNRLNPEM. The activation loop stretch occupies residues 2413 to 2438; sequence VAYFRFDINDATGDLDANRPVPFRLT. The FATC domain occupies 2533-2565; it reads QFDGGESKVNTLVAAANSLDNLCRMDPAWHPWL.

This sequence belongs to the PI3/PI4-kinase family. TRA1 subfamily. In terms of assembly, interacts with MYC, E2F1 and E2F4 transcription factors. Interacts directly with p53/TP53. Interacts with GCN5L2. Component of various HAT complexes. Component of the PCAF complex, at least composed of TADA2L/ADA2, SUPT3H, TADA3L/ADA3, TAF5L/PAF65-beta, TAF6L/PAF65-alpha, TAF10/TAFII30, TAF12/TAFII20, TAF9/TAFII31 and TRRAP. Component of the TFTC-HAT complex, at least composed of TAF5L, TAF6L, TADA3L, SUPT3H/SPT3, TAF2/TAFII150, TAF4/TAFII135, TAF5/TAFII100, GCN5L2/GCN5, TAF10 and TRRAP. Component of the NuA4 histone acetyltransferase complex which contains the catalytic subunit KAT5/TIP60 and the subunits EP400, TRRAP/PAF400, BRD8/SMAP, EPC1, DMAP1/DNMAP1, RUVBL1/TIP49, RUVBL2, ING3, actin, ACTL6A/BAF53A, MORF4L1/MRG15, MORF4L2/MRGX, MRGBP, YEATS4/GAS41, VPS72/YL1 and MEAF6. Component of the STAGA complex, at least composed of SUPT3H, GCN5L2, SUPT7L, TAF5L, TAF6L, TADA3L, TAD1L, TAF10, TAF12, TRRAP and TAF9. The STAGA core complex is associated with a subcomplex required for histone deubiquitination composed of ATXN7L3, ENY2 and USP22. Component of the BAF53 complex, at least composed of BAF53A, RUVBL1, SMARCA4/BRG1, and TRRAP, which preferentially acetylates histone H4 (and H2A) within nucleosomes. Interacts with NPAT. Interaction with TELO2 and TTI1. Component of a SWR1-like complex. In terms of tissue distribution, expressed in the cochlea.

It localises to the nucleus. Its function is as follows. Adapter protein, which is found in various multiprotein chromatin complexes with histone acetyltransferase activity (HAT), which gives a specific tag for epigenetic transcription activation. Component of the NuA4 histone acetyltransferase complex which is responsible for acetylation of nucleosomal histones H4 and H2A. Plays a central role in MYC transcription activation, and also participates in cell transformation by MYC. Required for p53/TP53-, E2F1- and E2F4-mediated transcription activation. Probably acts by linking transcription factors such as E1A, MYC or E2F1 to HAT complexes such as STAGA thereby allowing transcription activation. Probably not required in the steps following histone acetylation in processes of transcription activation. May be required for the mitotic checkpoint and normal cell cycle progression. Component of a SWR1-like complex that specifically mediates the removal of histone H2A.Z/H2AZ1 from the nucleosome. May play a role in the formation and maintenance of the auditory system. In Mus musculus (Mouse), this protein is Transformation/transcription domain-associated protein (Trrap).